Here is a 314-residue protein sequence, read N- to C-terminus: tRNA pseudouridine synthase B (314 aa).

The active-site Nucleophile is the Asp47.

This sequence belongs to the pseudouridine synthase TruB family. Type 1 subfamily.

It catalyses the reaction uridine(55) in tRNA = pseudouridine(55) in tRNA. Functionally, responsible for synthesis of pseudouridine from uracil-55 in the psi GC loop of transfer RNAs. This is tRNA pseudouridine synthase B from Vibrio vulnificus (strain CMCP6).